The sequence spans 377 residues: Nucleoside diphosphate kinase homolog 7 (377 aa).

A DM10 domain is found at 3–91 (HSERFVFIAE…YTARQLGSKK (89 aa)).

This sequence belongs to the NDK family. Component of sperm flagellar doublet microtubules. Component of the gamma-tubulin ring complex. Expressed in trachea multiciliated cells.

The protein resides in the cytoplasm. It is found in the cytoskeleton. Its subcellular location is the microtubule organizing center. The protein localises to the centrosome. It localises to the nucleus. The protein resides in the spindle. It is found in the cilium axoneme. Its subcellular location is the flagellum axoneme. The protein localises to the cell projection. It localises to the cilium. Possesses an intrinsic kinase activity. Displays 3'-5' exonuclease activity with a preference for single-stranded DNA. Does not seem to have nucleoside diphosphate kinase activity. Functional component of the gamma-tubulin ring complex, implicated in the regulation of the microtubule-nucleating activity of the gamma-tubulin ring complex in centrosomes, in a kinase activity-dependent manner. Part of the dynein-decorated doublet microtubules (DMTs) in cilia axoneme, which is required for motile cilia beating. This is Nucleoside diphosphate kinase homolog 7 (NME7) from Bos taurus (Bovine).